The sequence spans 256 residues: DNA repair protein RecO (256 aa).

This sequence belongs to the RecO family.

Its function is as follows. Involved in DNA repair and RecF pathway recombination. In Streptococcus equi subsp. zooepidemicus (strain MGCS10565), this protein is DNA repair protein RecO.